Consider the following 263-residue polypeptide: 4-hydroxy-tetrahydrodipicolinate reductase (263 aa).

Residues 7–12, 96–98, and 122–125 contribute to the NAD(+) site; these read GFKGRM, GTT, and APNF. The active-site Proton donor/acceptor is histidine 152. Position 153 (histidine 153) interacts with (S)-2,3,4,5-tetrahydrodipicolinate. The active-site Proton donor is the lysine 156. Residue 162–163 participates in (S)-2,3,4,5-tetrahydrodipicolinate binding; the sequence is GT.

It belongs to the DapB family.

The protein resides in the cytoplasm. It catalyses the reaction (S)-2,3,4,5-tetrahydrodipicolinate + NAD(+) + H2O = (2S,4S)-4-hydroxy-2,3,4,5-tetrahydrodipicolinate + NADH + H(+). It carries out the reaction (S)-2,3,4,5-tetrahydrodipicolinate + NADP(+) + H2O = (2S,4S)-4-hydroxy-2,3,4,5-tetrahydrodipicolinate + NADPH + H(+). The protein operates within amino-acid biosynthesis; L-lysine biosynthesis via DAP pathway; (S)-tetrahydrodipicolinate from L-aspartate: step 4/4. Functionally, catalyzes the conversion of 4-hydroxy-tetrahydrodipicolinate (HTPA) to tetrahydrodipicolinate. The polypeptide is 4-hydroxy-tetrahydrodipicolinate reductase (Listeria monocytogenes serotype 4b (strain CLIP80459)).